Consider the following 215-residue polypeptide: Probable transaldolase (215 aa).

Catalysis depends on Lys-83, which acts as the Schiff-base intermediate with substrate.

The protein belongs to the transaldolase family. Type 3B subfamily.

Its subcellular location is the cytoplasm. The enzyme catalyses D-sedoheptulose 7-phosphate + D-glyceraldehyde 3-phosphate = D-erythrose 4-phosphate + beta-D-fructose 6-phosphate. It participates in carbohydrate degradation; pentose phosphate pathway; D-glyceraldehyde 3-phosphate and beta-D-fructose 6-phosphate from D-ribose 5-phosphate and D-xylulose 5-phosphate (non-oxidative stage): step 2/3. Its function is as follows. Transaldolase is important for the balance of metabolites in the pentose-phosphate pathway. This is Probable transaldolase from Methanococcus vannielii (strain ATCC 35089 / DSM 1224 / JCM 13029 / OCM 148 / SB).